The primary structure comprises 1192 residues: Reticulon-4 (1192 aa).

Met1 carries the post-translational modification N-acetylmethionine. The disordered stretch occupies residues 1–204; the sequence is MEDLDQSPLV…ASEPVIRSSA (204 aa). Topologically, residues 1-1018 are cytoplasmic; that stretch reads MEDLDQSPLV…LYWRDIKKTG (1018 aa). Residues Ser7 and Ser15 each carry the phosphoserine modification. Acidic residues predominate over residues 31–53; it reads PEDEEEEEEEEEEDEDEDLEELE. The segment covering 65–77 has biased composition (low complexity); that stretch reads AAPVPTAPAAGAP. Over residues 87–101 the composition is skewed to pro residues; the sequence is PPAPRGPLPAAPPVA. Residue Ser107 is modified to Phosphoserine. Over residues 110–132 the composition is skewed to low complexity; the sequence is PSPVSSTVPAPSPLSAAAVSPSK. Positions 141-150 are enriched in pro residues; that stretch reads ARPPPPPPAS. A Phosphoserine modification is found at Ser152. Residues 159 to 173 show a composition bias toward pro residues; that stretch reads WTPPAPAPAAPPSTP. A phosphoserine mark is found at Ser181, Ser182, Ser184, Ser361, and Ser446. The segment at 427–458 is disordered; it reads DSLEQTNHEKDSESSNDDTSFPSTPEGIKDRS. Phosphothreonine is present on Thr450. Ser511 carries the phosphoserine modification. Over residues 722-734 the composition is skewed to basic and acidic residues; that stretch reads AKVEQPVPDHSEL. Residues 722-762 are disordered; it reads AKVEQPVPDHSELVEDSSPDSEPVDLFSDDSIPDVPQKQDE. The span at 735–753 shows a compositional bias: acidic residues; it reads VEDSSPDSEPVDLFSDDSI. Residue Ser749 is modified to Phosphoserine. Thr858 bears the Phosphothreonine mark. A phosphoserine mark is found at Ser881 and Ser991. Positions 1005-1192 constitute a Reticulon domain; sequence VVDLLYWRDI…KIPGLKRKAE (188 aa). A helical transmembrane segment spans residues 1019-1039; the sequence is VVFGASLFLLLSLTVFSIVSV. Residues 1040–1133 are Lumenal-facing; the sequence is TAYIALALLS…LMWVFTYVGA (94 aa). At Lys1104 the chain carries N6-acetyllysine. Residues 1134 to 1154 traverse the membrane as a helical segment; it reads LFNGLTLLILALISLFSVPVI. Residues 1155-1192 are Cytoplasmic-facing; it reads YERHQAQIDHYLGLANKNVKDAMAKIQAKIPGLKRKAE.

In terms of assembly, binds to RTN4R. Interacts with ATL1. Interacts with TMEM170A. Interacts with RTN4IP1. As to quaternary structure, interacts in trans with CNTNAP1. Interacts with REEP5. Interacts with synaptic plasticity regulator PANTS; the interaction results in enhanced RTN4-mediated inhibition of AMPA receptor clustering. Interacts with GPR50. Homodimer. Interacts with BAD/Bcl-xl and BCL2. Interact with RTN3. Interacts with NGBR. Interacts with SPTLC1. Interacts with GRAMD4. Interacts with CDH5. Interacts with BACE1 and BACE2. Interacts with REEP5. Interacts with RETREG3. In terms of assembly, interacts with BACE1 and BACE2. Interacts with TMEM33. In terms of tissue distribution, isoform A: is specifically expressed in brain and testis and weakly in heart and skeletal muscle. Isoform B: widely expressed except for the liver. Highly expressed in endothelial cells and vascular smooth muscle cells, including blood vessels and mesenteric arteries. Isoform C: is expressed in brain, skeletal muscle and adipocytes. Isoform D is testis-specific.

The protein localises to the endoplasmic reticulum membrane. Its subcellular location is the cell membrane. It localises to the synapse. It is found in the cell junction. Functionally, required to induce the formation and stabilization of endoplasmic reticulum (ER) tubules. They regulate membrane morphogenesis in the ER by promoting tubular ER production. They influence nuclear envelope expansion, nuclear pore complex formation and proper localization of inner nuclear membrane proteins. However each isoform have specific functions mainly depending on their tissue expression specificities. Developmental neurite growth regulatory factor with a role as a negative regulator of axon-axon adhesion and growth, and as a facilitator of neurite branching. Regulates neurite fasciculation, branching and extension in the developing nervous system. Involved in down-regulation of growth, stabilization of wiring and restriction of plasticity in the adult CNS. Regulates the radial migration of cortical neurons via an RTN4R-LINGO1 containing receptor complex. Acts as a negative regulator of central nervous system angiogenesis. Inhibits spreading, migration and sprouting of primary brain microvascular endothelial cells (MVECs). Also induces the retraction of MVECs lamellipodia and filopodia in a ROCK pathway-dependent manner. In terms of biological role, mainly function in endothelial cells and vascular smooth muscle cells, is also involved in immune system regulation. Modulator of vascular remodeling, promotes the migration of endothelial cells but inhibits the migration of vascular smooth muscle cells. Regulates endothelial sphingolipid biosynthesis with direct effects on vascular function and blood pressure. Inhibits serine palmitoyltransferase, SPTLC1, the rate-limiting enzyme of the novo sphingolipid biosynthetic pathway, thereby controlling production of endothelial sphingosine-1-phosphate (S1P). Required to promote macrophage homing and functions such as cytokine/chemokine gene expression involved in angiogenesis, arteriogenesis and tissue repair. Mediates ICAM1 induced transendothelial migration of leukocytes such as monocytes and neutrophils and acute inflammation. Necessary for immune responses triggered by nucleic acid sensing TLRs, such as TLR9, is required for proper TLR9 location to endolysosomes. Also involved in immune response to LPS. Plays a role in liver regeneration through the modulation of hepatocytes proliferation. Reduces the anti-apoptotic activity of Bcl-xl and Bcl-2. This is likely consecutive to their change in subcellular location, from the mitochondria to the endoplasmic reticulum, after binding and sequestration. With isoform C, inhibits BACE1 activity and amyloid precursor protein processing. Its function is as follows. Regulates cardiomyocyte apoptosis upon hypoxic conditions. With isoform B, inhibits BACE1 activity and amyloid precursor protein processing. This chain is Reticulon-4, found in Homo sapiens (Human).